A 121-amino-acid polypeptide reads, in one-letter code: Small ribosomal subunit protein uS13 (121 aa).

Positions 97–121 are disordered; sequence PVRGQKTHSNARTRKGPRASRIKKK. Positions 101-121 are enriched in basic residues; the sequence is QKTHSNARTRKGPRASRIKKK.

The protein belongs to the universal ribosomal protein uS13 family. Part of the 30S ribosomal subunit. Forms a loose heterodimer with protein S19. Forms two bridges to the 50S subunit in the 70S ribosome.

Its function is as follows. Located at the top of the head of the 30S subunit, it contacts several helices of the 16S rRNA. In the 70S ribosome it contacts the 23S rRNA (bridge B1a) and protein L5 of the 50S subunit (bridge B1b), connecting the 2 subunits; these bridges are implicated in subunit movement. Contacts the tRNAs in the A and P-sites. In Kosmotoga olearia (strain ATCC BAA-1733 / DSM 21960 / TBF 19.5.1), this protein is Small ribosomal subunit protein uS13.